The primary structure comprises 217 residues: KH domain-containing protein 3 (217 aa).

An involved in RNA binding region spans residues 1-40 (MDAPRRFPTLVQLMQPKAMPVEVLGHLPKRFSWFHSEFLK). The KH; atypical domain maps to 40–103 (KNPKVVRLEV…SYQEDTIKMI (64 aa)). Residues 129 to 217 (QKAETQRSSI…EDARDPVTRL (89 aa)) form a disordered region. A compositionally biased stretch (basic and acidic residues) spans 138–155 (IEVREAGTQRSVEVREAG). 2 positions are modified to phosphothreonine; by ATM: T145 and T156. Polar residues-rich tracts occupy residues 156–170 (TQRS…TQGS) and 177–194 (AGTQ…TQRS). S182 is subject to Phosphoserine. Residues 205-217 (RFREDARDPVTRL) are compositionally biased toward basic and acidic residues.

Belongs to the KHDC1 family. Component of the subcortical maternal complex (SCMC), at least composed of NLRP5, KHDC3L, OOEP, and TLE6 isoform 1. Within the complex, interacts with NLRP5, KHDC3L and TLE6 isoform 1. The SCMC may facilitate translocation of its components between the nuclear and cytoplasmic compartments. Forms a scaffold complex with OOEP/FLOPED, and interacts with BLM and TRIM25 at DNA replication forks. Interacts with PARP1; the interaction is increased following the formation of DNA double-strand breaks. Interacts with NUMA1. As to expression, expression appears to be maximal in germinal vesicle oocytes, it tails off through metaphase II oocytes and is undetectable following the completion of the oocyte to embryo transition.

The protein localises to the cytoplasm. The protein resides in the cell cortex. Its subcellular location is the nucleus. It is found in the mitochondrion. It localises to the cytoskeleton. The protein localises to the microtubule organizing center. The protein resides in the centrosome. Its subcellular location is the chromosome. Functionally, component of the subcortical maternal complex (SCMC), a multiprotein complex that plays a key role in early embryonic development. The SCMC complex is a structural constituent of cytoplasmic lattices, which consist in fibrous structures found in the cytoplasm of oocytes and preimplantation embryos. They are required to store maternal proteins critical for embryonic development, such as proteins that control epigenetic reprogramming of the preimplantation embryo, and prevent their degradation or activation. KHDC3 ensures proper spindle assembly by regulating the localization of AURKA via RHOA signaling and of PLK1 via a RHOA-independent process. Required for the localization of MAD2L1 to kinetochores to enable spindle assembly checkpoint function. As part of the OOEP-KHDC3 scaffold, recruits BLM and TRIM25 to DNA replication forks, thereby promoting the ubiquitination of BLM by TRIM25, enhancing BLM retainment at replication forks and therefore promoting stalled replication fork restart. Regulates homologous recombination-mediated DNA repair via recruitment of RAD51 to sites of DNA double-strand breaks, and sustainment of PARP1 activity, which in turn modulates downstream ATM or ATR activation. Activation of ATM or ATR in response to DNA double-strand breaks may be cell-type specific. Its role in DNA double-strand break repair is independent of its role in restarting stalled replication forks. Promotes neural stem cell neurogenesis and neuronal differentiation in the hippocampus. May regulate normal development of learning, memory and anxiety. Capable of binding RNA. The chain is KH domain-containing protein 3 from Homo sapiens (Human).